The following is a 307-amino-acid chain: 4-hydroxybenzoate geranyltransferase 1 (307 aa).

8 consecutive transmembrane segments (helical) span residues 38–58 (PIGS…AADL), 62–82 (PKML…GCTI), 120–140 (LFIG…LAIV), 154–174 (ITYW…LLGS), 179–199 (GSVV…WTLV), 230–250 (MWIS…GLIL), 252–272 (IGLP…WQIF), and 286–306 (FVSN…GRLF).

Belongs to the UbiA prenyltransferase family. The cofactor is Mg(2+). As to expression, expressed only in roots.

The protein localises to the endoplasmic reticulum membrane. The catalysed reaction is 4-hydroxybenzoate + (2E)-geranyl diphosphate = 3-geranyl-4-hydroxybenzoate + diphosphate. Functionally, prenyltransferase involved in the biosynthesis of shikonin, a naphthoquinone secondary metabolite. Could accept only geranyl diphosphate and not dimethylallyl diphosphate, farnesyl diphosphate, or geranylgeranyl diphosphate as substrate. This Lithospermum erythrorhizon (Purple gromwell) protein is 4-hydroxybenzoate geranyltransferase 1 (PGT-1).